The following is a 163-amino-acid chain: Cytochrome c-type biogenesis protein CcmE (163 aa).

Residues 1–8 (MNPRRKKR) are Cytoplasmic-facing. The chain crosses the membrane as a helical; Signal-anchor for type II membrane protein span at residues 9–29 (LTIILAISAGLAAVIGLVLYA). The Periplasmic segment spans residues 30–163 (LSQNIDLFYT…TEAQLKGSKQ (134 aa)). Residues His-131 and Tyr-135 each contribute to the heme site.

This sequence belongs to the CcmE/CycJ family.

The protein localises to the cell inner membrane. Functionally, heme chaperone required for the biogenesis of c-type cytochromes. Transiently binds heme delivered by CcmC and transfers the heme to apo-cytochromes in a process facilitated by CcmF and CcmH. The polypeptide is Cytochrome c-type biogenesis protein CcmE (Aeromonas hydrophila subsp. hydrophila (strain ATCC 7966 / DSM 30187 / BCRC 13018 / CCUG 14551 / JCM 1027 / KCTC 2358 / NCIMB 9240 / NCTC 8049)).